We begin with the raw amino-acid sequence, 154 residues long: 6,7-dimethyl-8-ribityllumazine synthase (154 aa).

5-amino-6-(D-ribitylamino)uracil is bound by residues phenylalanine 23, 57 to 59 (AYE), and 81 to 83 (AVI). 86–87 (GT) is a binding site for (2S)-2-hydroxy-3-oxobutyl phosphate. The active-site Proton donor is the histidine 89. Residue phenylalanine 114 coordinates 5-amino-6-(D-ribitylamino)uracil. Arginine 128 lines the (2S)-2-hydroxy-3-oxobutyl phosphate pocket.

The protein belongs to the DMRL synthase family. In terms of assembly, forms an icosahedral capsid composed of 60 subunits, arranged as a dodecamer of pentamers.

It catalyses the reaction (2S)-2-hydroxy-3-oxobutyl phosphate + 5-amino-6-(D-ribitylamino)uracil = 6,7-dimethyl-8-(1-D-ribityl)lumazine + phosphate + 2 H2O + H(+). It participates in cofactor biosynthesis; riboflavin biosynthesis; riboflavin from 2-hydroxy-3-oxobutyl phosphate and 5-amino-6-(D-ribitylamino)uracil: step 1/2. In terms of biological role, catalyzes the formation of 6,7-dimethyl-8-ribityllumazine by condensation of 5-amino-6-(D-ribitylamino)uracil with 3,4-dihydroxy-2-butanone 4-phosphate. This is the penultimate step in the biosynthesis of riboflavin. The protein is 6,7-dimethyl-8-ribityllumazine synthase of Acidithiobacillus ferrooxidans (strain ATCC 23270 / DSM 14882 / CIP 104768 / NCIMB 8455) (Ferrobacillus ferrooxidans (strain ATCC 23270)).